Here is a 299-residue protein sequence, read N- to C-terminus: UDP-N-acetylenolpyruvoylglucosamine reductase (299 aa).

An FAD-binding PCMH-type domain is found at 29–193 (RIGGPAEIFL…TAASLRFRKA (165 aa)). Residue arginine 173 is part of the active site. Serine 222 functions as the Proton donor in the catalytic mechanism. The active site involves glutamate 292.

This sequence belongs to the MurB family. FAD serves as cofactor.

It is found in the cytoplasm. It carries out the reaction UDP-N-acetyl-alpha-D-muramate + NADP(+) = UDP-N-acetyl-3-O-(1-carboxyvinyl)-alpha-D-glucosamine + NADPH + H(+). Its pathway is cell wall biogenesis; peptidoglycan biosynthesis. Its function is as follows. Cell wall formation. This is UDP-N-acetylenolpyruvoylglucosamine reductase from Syntrophotalea carbinolica (strain DSM 2380 / NBRC 103641 / GraBd1) (Pelobacter carbinolicus).